The following is a 615-amino-acid chain: Protein DBF4 homolog B (615 aa).

In terms of domain architecture, BRCT spans 43–133; sequence ARKHPFSGKS…DPKGSHPRPS (91 aa). 2 disordered regions span residues 93–141 and 264–293; these read REVK…DSVP and FEAP…AHTM. Residues 275-284 are compositionally biased toward basic and acidic residues; that stretch reads HTRESKDGEP. The segment at 294 to 343 adopts a DBF4-type zinc-finger fold; that stretch reads PRRKKGYCECCQEAFEELHVHLQSAQHRSFALEAHLYAEVDRIIAQLSHS. Residues C301, C304, H314, and H320 each coordinate Zn(2+). Residues 371–407 are disordered; that stretch reads TLHPHQPSHPRAASPRIRKEDSCQASVTQGRAAGQQR.

As to quaternary structure, forms a complex with CDC7. Note that CDC7 forms distinct complex either with DBF4/DBF4A or DBF4B. Such complexes are stable upon replication stress. Post-translationally, phosphorylated. As to expression, widely expressed. Highly expressed in testis.

The protein localises to the nucleus. Functionally, regulatory subunit for CDC7 which activates its kinase activity thereby playing a central role in DNA replication and cell proliferation. Required for progression of S and M phases. The complex CDC7-DBF4B selectively phosphorylates MCM2 subunit at 'Ser-40' and then is involved in regulating the initiation of DNA replication during cell cycle. The sequence is that of Protein DBF4 homolog B (DBF4B) from Homo sapiens (Human).